Reading from the N-terminus, the 200-residue chain is Transgelin (200 aa).

Alanine 2 is subject to N-acetylalanine. In terms of domain architecture, Calponin-homology (CH) spans 24 to 137 (DELEDRLVEW…RTLVALGSLA (114 aa)). A Calponin-like repeat occupies 175–199 (IGLQMGTNKGASQAGMSYGRPRQII).

Belongs to the calponin family. In terms of assembly, monomer. In terms of tissue distribution, gizzard, uterus, intestine, esophagus, aorta, and trace amounts in brain, liver and heart.

The protein localises to the cytoplasm. Actin cross-linking/gelling protein. The chain is Transgelin (TAGLN) from Gallus gallus (Chicken).